A 678-amino-acid polypeptide reads, in one-letter code: Photosystem I P700 chlorophyll a apoprotein A1 (678 aa).

A run of 8 helical transmembrane segments spans residues 75 to 98, 152 to 175, 192 to 216, 266 to 284, 302 to 325, 341 to 367, 384 to 406, and 458 to 476; these read VFAA…FHGA, LKVI…FHMH, STHH…HISL, SAMH…SVLG, WHLV…QMSN, VSLF…IGLV, IILG…LYVH, and FMVT…LILV. The [4Fe-4S] cluster site is built by C500 and C509. The next 2 membrane-spanning stretches (helical) occupy residues 516–537 and 591–613; these read HVFL…HFFW and LAAY…MFLF. H602 is a chlorophyll a' binding site. The chlorophyll a site is built by M610 and Y618. W619 contributes to the phylloquinone binding site. The helical transmembrane segment at 651 to 671 threads the bilayer; it reads AVGFTHYLLGGIGSTWSFFLA.

It belongs to the PsaA/PsaB family. As to quaternary structure, the PsaA/B heterodimer binds the P700 chlorophyll special pair and subsequent electron acceptors. PSI consists of a core antenna complex that captures photons, and an electron transfer chain that converts photonic excitation into a charge separation. The eukaryotic PSI reaction center is composed of at least 11 subunits. The cofactor is P700 is a chlorophyll a/chlorophyll a' dimer, A0 is one or more chlorophyll a, A1 is one or both phylloquinones and FX is a shared 4Fe-4S iron-sulfur center..

Its subcellular location is the plastid. It is found in the chloroplast thylakoid membrane. The catalysed reaction is reduced [plastocyanin] + hnu + oxidized [2Fe-2S]-[ferredoxin] = oxidized [plastocyanin] + reduced [2Fe-2S]-[ferredoxin]. Its function is as follows. PsaA and PsaB bind P700, the primary electron donor of photosystem I (PSI), as well as the electron acceptors A0, A1 and FX. PSI is a plastocyanin/cytochrome c6-ferredoxin oxidoreductase, converting photonic excitation into a charge separation, which transfers an electron from the donor P700 chlorophyll pair to the spectroscopically characterized acceptors A0, A1, FX, FA and FB in turn. Oxidized P700 is reduced on the lumenal side of the thylakoid membrane by plastocyanin or cytochrome c6. The sequence is that of Photosystem I P700 chlorophyll a apoprotein A1 from Amphidinium carterae (Dinoflagellate).